The sequence spans 351 residues: Glycerol-3-phosphate dehydrogenase 1-like protein (351 aa).

11 to 16 (GSGNWG) is a binding site for NAD(+). K121 contacts substrate. Residue A154 participates in NAD(+) binding. The Proton acceptor role is filled by K205. NAD(+) contacts are provided by R271, K298, and Q300. Residue 271 to 272 (RN) coordinates substrate.

It belongs to the NAD-dependent glycerol-3-phosphate dehydrogenase family.

The protein localises to the cytoplasm. It catalyses the reaction sn-glycerol 3-phosphate + NAD(+) = dihydroxyacetone phosphate + NADH + H(+). Its function is as follows. Plays a role in regulating cardiac sodium current. The polypeptide is Glycerol-3-phosphate dehydrogenase 1-like protein (gpd1l) (Danio rerio (Zebrafish)).